Consider the following 340-residue polypeptide: GTPase Obg (340 aa).

The Obg domain maps to 1–161 (MKFVDMTNIT…QHLLLELLLI (161 aa)). The 174-residue stretch at 162–335 (ANVGIFGLPN…LCNSIMKFIM (174 aa)) folds into the OBG-type G domain. GTP contacts are provided by residues 168–175 (GLPNSGKS), 193–197 (FTTLV), 215–218 (DIPG), 285–288 (NKID), and 316–318 (SSI). Positions 175 and 195 each coordinate Mg(2+).

Belongs to the TRAFAC class OBG-HflX-like GTPase superfamily. OBG GTPase family. Monomer. Mg(2+) is required as a cofactor.

Its subcellular location is the cytoplasm. In terms of biological role, an essential GTPase which binds GTP, GDP and possibly (p)ppGpp with moderate affinity, with high nucleotide exchange rates and a fairly low GTP hydrolysis rate. Plays a role in control of the cell cycle, stress response, ribosome biogenesis and in those bacteria that undergo differentiation, in morphogenesis control. The sequence is that of GTPase Obg from Blochmanniella pennsylvanica (strain BPEN).